Here is a 205-residue protein sequence, read N- to C-terminus: Large ribosomal subunit protein bL17c (205 aa).

A chloroplast-targeting transit peptide spans 1–89 (MASASTTWSM…VIDNGGRVFA (89 aa)).

Belongs to the bacterial ribosomal protein bL17 family. In terms of assembly, part of the 50S ribosomal subunit.

The protein resides in the plastid. It is found in the chloroplast. This protein binds directly to 23S ribosomal RNA. The chain is Large ribosomal subunit protein bL17c (RPL17) from Nicotiana tabacum (Common tobacco).